A 512-amino-acid chain; its full sequence is tRNA-2-methylthio-N(6)-dimethylallyladenosine synthase (512 aa).

Positions 1-22 (MVAHDAAAGVTGEGAGPPVRRA) are disordered. Residues 25-141 (RTYQVRTYGC…LPTLLERARH (117 aa)) enclose the MTTase N-terminal domain. The [4Fe-4S] cluster site is built by Cys-34, Cys-70, Cys-104, Cys-178, Cys-182, and Cys-185. The Radical SAM core domain maps to 164-400 (RESAYAAWVS…IALQEQISLE (237 aa)). Positions 403 to 471 (RALVGQAVEV…PHHLIADAGV (69 aa)) constitute a TRAM domain.

This sequence belongs to the methylthiotransferase family. MiaB subfamily. Monomer. It depends on [4Fe-4S] cluster as a cofactor.

It localises to the cytoplasm. The enzyme catalyses N(6)-dimethylallyladenosine(37) in tRNA + (sulfur carrier)-SH + AH2 + 2 S-adenosyl-L-methionine = 2-methylsulfanyl-N(6)-dimethylallyladenosine(37) in tRNA + (sulfur carrier)-H + 5'-deoxyadenosine + L-methionine + A + S-adenosyl-L-homocysteine + 2 H(+). Its function is as follows. Catalyzes the methylthiolation of N6-(dimethylallyl)adenosine (i(6)A), leading to the formation of 2-methylthio-N6-(dimethylallyl)adenosine (ms(2)i(6)A) at position 37 in tRNAs that read codons beginning with uridine. This is tRNA-2-methylthio-N(6)-dimethylallyladenosine synthase from Mycobacterium bovis (strain ATCC BAA-935 / AF2122/97).